The primary structure comprises 461 residues: Cysteine--tRNA ligase (461 aa).

Cysteine 28 contributes to the Zn(2+) binding site. Residues 30-40 carry the 'HIGH' region motif; the sequence is ITVYDLCHIGH. Zn(2+)-binding residues include cysteine 209, histidine 234, and glutamate 238. Residues 266–270 carry the 'KMSKS' region motif; the sequence is KMSKS. Lysine 269 contacts ATP.

It belongs to the class-I aminoacyl-tRNA synthetase family. As to quaternary structure, monomer. It depends on Zn(2+) as a cofactor.

The protein localises to the cytoplasm. It catalyses the reaction tRNA(Cys) + L-cysteine + ATP = L-cysteinyl-tRNA(Cys) + AMP + diphosphate. The chain is Cysteine--tRNA ligase from Escherichia coli (strain K12 / MC4100 / BW2952).